We begin with the raw amino-acid sequence, 178 residues long: Ribosome maturation factor RimP (178 aa).

The protein belongs to the RimP family.

It localises to the cytoplasm. Functionally, required for maturation of 30S ribosomal subunits. The sequence is that of Ribosome maturation factor RimP from Mycolicibacterium gilvum (strain PYR-GCK) (Mycobacterium gilvum (strain PYR-GCK)).